The sequence spans 119 residues: Large ribosomal subunit protein bL20 (119 aa).

Belongs to the bacterial ribosomal protein bL20 family.

Binds directly to 23S ribosomal RNA and is necessary for the in vitro assembly process of the 50S ribosomal subunit. It is not involved in the protein synthesizing functions of that subunit. The protein is Large ribosomal subunit protein bL20 of Acidovorax ebreus (strain TPSY) (Diaphorobacter sp. (strain TPSY)).